The primary structure comprises 404 residues: Pleckstrin homology domain-containing family A member 1 (404 aa).

PH domains lie at 7-112 (QNRI…KAIK) and 191-289 (AVIK…GAIV). Disordered stretches follow at residues 291–332 (QRGP…RSNS) and 355–404 (NFKV…VSDV). A compositionally biased stretch (low complexity) spans 316–332 (TNAATATSHSTASRSNS). Phosphoserine is present on residues S332 and S362.

Interacts with MPDZ and PTPN13. Highly expressed in skeletal muscle, thymus, pancreas, placenta and lung. Detected at low levels in brain, heart, peripheral blood leukocytes, testis, ovary, spinal cord, thyroid, kidney, liver, small intestine and colon.

The protein resides in the cytoplasm. The protein localises to the cell membrane. Its subcellular location is the nucleus. Its function is as follows. Binds specifically to phosphatidylinositol 3,4-diphosphate (PtdIns3,4P2), but not to other phosphoinositides. May recruit other proteins to the plasma membrane. This Homo sapiens (Human) protein is Pleckstrin homology domain-containing family A member 1 (PLEKHA1).